Reading from the N-terminus, the 407-residue chain is Expansin-like protein 2 (407 aa).

The signal sequence occupies residues 1 to 23 (MKMKNFLSKSLLVLLIGLIGVKS). The 100-residue stretch at 42-141 (HGNCGYEQLT…KKVSCDVTGN (100 aa)) folds into the Expansin-like EG45 domain. Disulfide bonds link Cys45–Cys75 and Cys78–Cys136. N-linked (GlcNAc...) asparagine glycosylation is found at Asn70, Asn117, and Asn387.

Belongs to the expansin family. Expansin A subfamily.

It localises to the secreted. In terms of biological role, unlikely to encode with a protein with expansin activity. This chain is Expansin-like protein 2 (expl2), found in Dictyostelium discoideum (Social amoeba).